Consider the following 334-residue polypeptide: Glycerol-3-phosphate dehydrogenase [NAD(P)+] (334 aa).

Residues tryptophan 13, arginine 33, and lysine 106 each contribute to the NADPH site. Lysine 106, glycine 137, and serine 139 together coordinate sn-glycerol 3-phosphate. Alanine 141 contributes to the NADPH binding site. Residues lysine 192, aspartate 245, serine 255, arginine 256, and asparagine 257 each coordinate sn-glycerol 3-phosphate. Lysine 192 serves as the catalytic Proton acceptor. Arginine 256 is an NADPH binding site. NADPH contacts are provided by valine 280 and glutamate 282.

It belongs to the NAD-dependent glycerol-3-phosphate dehydrogenase family.

It is found in the cytoplasm. It carries out the reaction sn-glycerol 3-phosphate + NAD(+) = dihydroxyacetone phosphate + NADH + H(+). The catalysed reaction is sn-glycerol 3-phosphate + NADP(+) = dihydroxyacetone phosphate + NADPH + H(+). It functions in the pathway membrane lipid metabolism; glycerophospholipid metabolism. In terms of biological role, catalyzes the reduction of the glycolytic intermediate dihydroxyacetone phosphate (DHAP) to sn-glycerol 3-phosphate (G3P), the key precursor for phospholipid synthesis. In Chlamydia felis (strain Fe/C-56) (Chlamydophila felis), this protein is Glycerol-3-phosphate dehydrogenase [NAD(P)+].